An 860-amino-acid polypeptide reads, in one-letter code: Semaphorin-3aa (860 aa).

The first 17 residues, 1-17 (MDYLVGIFLLLCGVALP), serve as a signal peptide directing secretion. The 485-residue stretch at 31 to 515 (RLKLSYNEML…SDLGISQMPL (485 aa)) folds into the Sema domain. N-linked (GlcNAc...) asparagine glycosylation is present at N53. A disulfide bridge connects residues C104 and C115. An N-linked (GlcNAc...) asparagine glycan is attached at N126. 4 disulfide bridges follow: C133–C142, C270–C382, C294–C342, and C518–C536. The Ig-like C2-type domain maps to 579–668 (GYSSVEERSV…FIQPLRRINL (90 aa)). N593 is a glycosylation site (N-linked (GlcNAc...) asparagine). The cysteines at positions 652 and 717 are disulfide-linked. Positions 725–860 (KKPKGKKAPK…HEQQRPPRSV (136 aa)) are disordered. Composition is skewed to polar residues over residues 748–764 (TPQT…QRAQ) and 782–818 (TGLQ…QPNQ). Positions 838–860 (QLQENKRGRNRRTHEQQRPPRSV) are enriched in basic and acidic residues.

The protein belongs to the semaphorin family.

The protein resides in the secreted. Functionally, may influence outgrowth by a variety of growth cones including those of the posterior lateral line ganglion. This is Semaphorin-3aa (sema3aa) from Danio rerio (Zebrafish).